The following is a 436-amino-acid chain: 3-ketoacyl-CoA thiolase (436 aa).

Cys99 acts as the Acyl-thioester intermediate in catalysis. Residues His392 and Cys422 each act as proton acceptor in the active site.

Belongs to the thiolase-like superfamily. Thiolase family. As to quaternary structure, heterotetramer of two alpha chains (FadJ) and two beta chains (FadI).

It localises to the cytoplasm. It carries out the reaction an acyl-CoA + acetyl-CoA = a 3-oxoacyl-CoA + CoA. It participates in lipid metabolism; fatty acid beta-oxidation. Its function is as follows. Catalyzes the final step of fatty acid oxidation in which acetyl-CoA is released and the CoA ester of a fatty acid two carbons shorter is formed. The sequence is that of 3-ketoacyl-CoA thiolase from Yersinia pestis bv. Antiqua (strain Angola).